A 428-amino-acid chain; its full sequence is MTIVKDLIFRISSLKFAISLIIFIAISSGVGTFIPQGSNSKFYIENFDEAPIFGFLNGEKVLILQLDHIYTSLWFLFALILLCISLAACSFRRQIPSLKASLKWIEYKSEKKFRKLQLNSSYQINEVEDLISKADLFLKKRGWKTYKFKSHISARKGLIGKIGPLVVHIGLIVLLIGSAYGSFTSQSKEQYLLPGESLDLINESTNSKANIKLVDFSIERESDGIPKQFISKLDFTSEDSKFNEVKTAKVNHPIRFKGLTIYQADWAISNIVLEIDNILYQLQLKEIPEIGNQVWGILIELGSETKKNFLLTIDNENGPLKISNTENFSGNNLYINENPLEVNSSKVSLKKIIPSSGLIIKNDPSIPFIYFSFILIIFGTIISLIPTNQLWILVNQESQSLSIGGLSNKNLVGFKKEFFKLSEEIKNF.

Helical transmembrane passes span 14–34 (LKFAISLIIFIAISSGVGTFI), 72–92 (SLWFLFALILLCISLAACSFR), and 162–182 (IGPLVVHIGLIVLLIGSAYGS).

This sequence belongs to the Ccs1/CcsB family. May interact with CcsA.

It is found in the cellular thylakoid membrane. Required during biogenesis of c-type cytochromes (cytochrome c6 and cytochrome f) at the step of heme attachment. The chain is Cytochrome c biogenesis protein CcsB from Prochlorococcus marinus (strain MIT 9301).